Reading from the N-terminus, the 461-residue chain is ATP-dependent protease ATPase subunit HslU (461 aa).

ATP-binding positions include I18 and 60 to 65; that span reads GVGKTE. Residues 157–178 form a disordered region; it reads EGSSVKPEPTAQQKESRQKMRK. D273, E339, and R411 together coordinate ATP.

Belongs to the ClpX chaperone family. HslU subfamily. As to quaternary structure, a double ring-shaped homohexamer of HslV is capped on each side by a ring-shaped HslU homohexamer. The assembly of the HslU/HslV complex is dependent on binding of ATP.

The protein resides in the cytoplasm. Its function is as follows. ATPase subunit of a proteasome-like degradation complex; this subunit has chaperone activity. The binding of ATP and its subsequent hydrolysis by HslU are essential for unfolding of protein substrates subsequently hydrolyzed by HslV. HslU recognizes the N-terminal part of its protein substrates and unfolds these before they are guided to HslV for hydrolysis. This is ATP-dependent protease ATPase subunit HslU from Magnetococcus marinus (strain ATCC BAA-1437 / JCM 17883 / MC-1).